Consider the following 149-residue polypeptide: Ribonuclease pancreatic alpha-type (149 aa).

A signal peptide spans 1–25 (MGLEKSFILFSLLVLVLGWVQPSLG). Positions 32 and 35 each coordinate substrate. Residue His37 is the Proton acceptor of the active site. 4 disulfide bridges follow: Cys51–Cys109, Cys65–Cys120, Cys83–Cys135, and Cys90–Cys97. Substrate contacts are provided by residues 66-70 (KPVNT), Lys91, and Arg110. The Proton donor role is filled by His144.

It belongs to the pancreatic ribonuclease family. In terms of assembly, monomer.

It is found in the secreted. It catalyses the reaction an [RNA] containing cytidine + H2O = an [RNA]-3'-cytidine-3'-phosphate + a 5'-hydroxy-ribonucleotide-3'-[RNA].. The enzyme catalyses an [RNA] containing uridine + H2O = an [RNA]-3'-uridine-3'-phosphate + a 5'-hydroxy-ribonucleotide-3'-[RNA].. Functionally, endonuclease that catalyzes the cleavage of RNA on the 3' side of pyrimidine nucleotides. Acts on single-stranded and double-stranded RNA. The polypeptide is Ribonuclease pancreatic alpha-type (Rattus fuscipes (Bush rat)).